The chain runs to 513 residues: 2-isopropylmalate synthase (513 aa).

In terms of domain architecture, Pyruvate carboxyltransferase spans 7–269; the sequence is VYIFDTTLRD…TTGIVTEELF (263 aa). Mn(2+)-binding residues include aspartate 16, histidine 204, histidine 206, and asparagine 240. A regulatory domain region spans residues 393–513; the sequence is ALQFLSVHCG…KEEERTCPQL (121 aa).

The protein belongs to the alpha-IPM synthase/homocitrate synthase family. LeuA type 1 subfamily. In terms of assembly, homodimer. The cofactor is Mn(2+).

The protein localises to the cytoplasm. The catalysed reaction is 3-methyl-2-oxobutanoate + acetyl-CoA + H2O = (2S)-2-isopropylmalate + CoA + H(+). The protein operates within amino-acid biosynthesis; L-leucine biosynthesis; L-leucine from 3-methyl-2-oxobutanoate: step 1/4. In terms of biological role, catalyzes the condensation of the acetyl group of acetyl-CoA with 3-methyl-2-oxobutanoate (2-ketoisovalerate) to form 3-carboxy-3-hydroxy-4-methylpentanoate (2-isopropylmalate). The protein is 2-isopropylmalate synthase of Solidesulfovibrio magneticus (strain ATCC 700980 / DSM 13731 / RS-1) (Desulfovibrio magneticus).